Reading from the N-terminus, the 342-residue chain is UDP-N-acetylenolpyruvoylglucosamine reductase (342 aa).

Positions 17-192 constitute an FAD-binding PCMH-type domain; sequence RFEAAARYAA…AEVTFALPVD (176 aa). Arg168 is an active-site residue. The active-site Proton donor is Ser242. Glu338 is an active-site residue.

This sequence belongs to the MurB family. The cofactor is FAD.

The protein resides in the cytoplasm. It carries out the reaction UDP-N-acetyl-alpha-D-muramate + NADP(+) = UDP-N-acetyl-3-O-(1-carboxyvinyl)-alpha-D-glucosamine + NADPH + H(+). Its pathway is cell wall biogenesis; peptidoglycan biosynthesis. Cell wall formation. The sequence is that of UDP-N-acetylenolpyruvoylglucosamine reductase from Ralstonia nicotianae (strain ATCC BAA-1114 / GMI1000) (Ralstonia solanacearum).